The sequence spans 388 residues: Probable ubiquitin-conjugating enzyme E2 L709 (388 aa).

The UBC core domain occupies N3–F162. C95 serves as the catalytic Glycyl thioester intermediate. Residues V195–K388 are disordered. Acidic residues-rich tracts occupy residues S221–S238 and D246–E297. A compositionally biased stretch (low complexity) spans K310–K388.

Belongs to the ubiquitin-conjugating enzyme family.

The enzyme catalyses S-ubiquitinyl-[E1 ubiquitin-activating enzyme]-L-cysteine + [E2 ubiquitin-conjugating enzyme]-L-cysteine = [E1 ubiquitin-activating enzyme]-L-cysteine + S-ubiquitinyl-[E2 ubiquitin-conjugating enzyme]-L-cysteine.. It functions in the pathway protein modification; protein ubiquitination. Functionally, catalyzes the covalent attachment of ubiquitin to other proteins. The polypeptide is Probable ubiquitin-conjugating enzyme E2 L709 (Acanthamoeba polyphaga (Amoeba)).